Consider the following 229-residue polypeptide: 2-C-methyl-D-erythritol 4-phosphate cytidylyltransferase (229 aa).

It belongs to the IspD/TarI cytidylyltransferase family. IspD subfamily.

It carries out the reaction 2-C-methyl-D-erythritol 4-phosphate + CTP + H(+) = 4-CDP-2-C-methyl-D-erythritol + diphosphate. Its pathway is isoprenoid biosynthesis; isopentenyl diphosphate biosynthesis via DXP pathway; isopentenyl diphosphate from 1-deoxy-D-xylulose 5-phosphate: step 2/6. In terms of biological role, catalyzes the formation of 4-diphosphocytidyl-2-C-methyl-D-erythritol from CTP and 2-C-methyl-D-erythritol 4-phosphate (MEP). In Clostridium botulinum (strain 657 / Type Ba4), this protein is 2-C-methyl-D-erythritol 4-phosphate cytidylyltransferase.